The chain runs to 328 residues: dITP/XTP pyrophosphatase (328 aa).

The tract at residues 1-129 (MSEKIYEYKD…ATSEQGFGDT (129 aa)) is unknown. The interval 130 to 324 (ILIATRNEGK…KLMEVFPAWQ (195 aa)) is NTP pyrophosphatase. 134–139 (TRNEGK) contacts substrate. Aspartate 196 serves as the catalytic Proton acceptor. Aspartate 196 serves as a coordination point for Mg(2+). Residues serine 197, 280–283 (FGYD), lysine 303, and 308–309 (HR) contribute to the substrate site.

The protein belongs to the HAM1 NTPase family. In terms of assembly, homodimer. Requires Mg(2+) as cofactor.

It carries out the reaction XTP + H2O = XMP + diphosphate + H(+). It catalyses the reaction dITP + H2O = dIMP + diphosphate + H(+). The catalysed reaction is ITP + H2O = IMP + diphosphate + H(+). In terms of biological role, pyrophosphatase that catalyzes the hydrolysis of nucleoside triphosphates to their monophosphate derivatives, with a high preference for the non-canonical purine nucleotides XTP (xanthosine triphosphate), dITP (deoxyinosine triphosphate) and ITP. Seems to function as a house-cleaning enzyme that removes non-canonical purine nucleotides from the nucleotide pool, thus preventing their incorporation into DNA/RNA and avoiding chromosomal lesions. The polypeptide is dITP/XTP pyrophosphatase (Streptococcus pyogenes serotype M18 (strain MGAS8232)).